A 116-amino-acid chain; its full sequence is Fluoride-specific ion channel FluC 2 (116 aa).

2 helical membrane-spanning segments follow: residues 3 to 23 and 43 to 63; these read LLTALAVGAGGAAGAVARYAV and LLFGVAIGADFGGAPAVAVTV. Positions 67 and 70 each coordinate Na(+). The helical transmembrane segment at 96–116 threads the bilayer; that stretch reads VGTLAAALLAVFLGIALGAAL.

Belongs to the fluoride channel Fluc/FEX (TC 1.A.43) family.

Its subcellular location is the cell membrane. It catalyses the reaction fluoride(in) = fluoride(out). With respect to regulation, na(+) is not transported, but it plays an essential structural role and its presence is essential for fluoride channel function. Fluoride-specific ion channel. Important for reducing fluoride concentration in the cell, thus reducing its toxicity. The chain is Fluoride-specific ion channel FluC 2 from Natronomonas pharaonis (strain ATCC 35678 / DSM 2160 / CIP 103997 / JCM 8858 / NBRC 14720 / NCIMB 2260 / Gabara) (Halobacterium pharaonis).